A 179-amino-acid polypeptide reads, in one-letter code: MASQNRDPAATSVTAARKGAEPSGGAARGPVGKRLQQELMTLMMSGDKGISAFPESDNLFKWVGTIHGAAGTVYEDLRYKLSLEFPSGYPYNAPTVKFLTPCYHPNVDTQGNICLDILKDKWSALYDVRTILLSIQSLLGEPNIDSPLNTHAAELWKNPTAFKKYLQETYSKQVTSQEP.

Over residues 1–14 (MASQNRDPAATSVT) the composition is skewed to polar residues. Residues 1-31 (MASQNRDPAATSVTAARKGAEPSGGAARGPV) are disordered. An N-acetylalanine modification is found at Ala2. Position 3 is a phosphoserine (Ser3). The UBC core domain maps to 30–175 (PVGKRLQQEL…LQETYSKQVT (146 aa)). The Glycyl thioester intermediate role is filled by Cys114.

The protein belongs to the ubiquitin-conjugating enzyme family. As to quaternary structure, component of the APC/C complex, composed of at least 14 distinct subunits that assemble into a complex of at least 19 chains with a combined molecular mass of around 1.2 MDa. Within this complex, directly interacts with ANAPC2. Autoubiquitinated by the APC/C complex, leading to its degradation by the proteasome. Its degradation plays a central role in APC/C regulation, allowing cyclin-A accumulation before S phase entry. APC/C substrates inhibit the autoubiquitination of UBE2C/UBCH10 but not its E2 function, hence APC/C remaining active until its substrates have been destroyed.

It carries out the reaction S-ubiquitinyl-[E1 ubiquitin-activating enzyme]-L-cysteine + [E2 ubiquitin-conjugating enzyme]-L-cysteine = [E1 ubiquitin-activating enzyme]-L-cysteine + S-ubiquitinyl-[E2 ubiquitin-conjugating enzyme]-L-cysteine.. The catalysed reaction is S-ubiquitinyl-[E1 ubiquitin-activating enzyme]-L-cysteine + [acceptor protein]-L-lysine = [E1 ubiquitin-activating enzyme]-L-cysteine + N(6)-monoubiquitinyl-[acceptor protein]-L-lysine.. The protein operates within protein modification; protein ubiquitination. Functionally, accepts ubiquitin from the E1 complex and catalyzes its covalent attachment to other proteins. In vitro catalyzes 'Lys-11'- and 'Lys-48'-linked polyubiquitination. Acts as an essential factor of the anaphase promoting complex/cyclosome (APC/C), a cell cycle-regulated ubiquitin ligase that controls progression through mitosis. Acts by initiating 'Lys-11'-linked polyubiquitin chains on APC/C substrates, leading to the degradation of APC/C substrates by the proteasome and promoting mitotic exit. This chain is Ubiquitin-conjugating enzyme E2 C (UBE2C), found in Macaca fascicularis (Crab-eating macaque).